Consider the following 368-residue polypeptide: Ribosomal RNA large subunit methyltransferase M (368 aa).

Residues serine 189, 222 to 225 (CPGG), aspartate 241, aspartate 261, and aspartate 278 each bind S-adenosyl-L-methionine. The Proton acceptor role is filled by lysine 307.

The protein belongs to the class I-like SAM-binding methyltransferase superfamily. RNA methyltransferase RlmE family. RlmM subfamily. In terms of assembly, monomer.

The protein localises to the cytoplasm. The catalysed reaction is cytidine(2498) in 23S rRNA + S-adenosyl-L-methionine = 2'-O-methylcytidine(2498) in 23S rRNA + S-adenosyl-L-homocysteine + H(+). Its function is as follows. Catalyzes the 2'-O-methylation at nucleotide C2498 in 23S rRNA. The sequence is that of Ribosomal RNA large subunit methyltransferase M from Yersinia pseudotuberculosis serotype O:1b (strain IP 31758).